Reading from the N-terminus, the 751-residue chain is Catalase-peroxidase (751 aa).

The segment at 1–24 (MADKCPFHNQAPKPNVAGSGTQNR) is disordered. The tryptophyl-tyrosyl-methioninium (Trp-Tyr) (with M-267) cross-link spans 95-241 (WHSAGTYRTF…LAAAHMGLIY (147 aa)). Catalysis depends on His-96, which acts as the Proton acceptor. Residues 241–267 (YVNPEGPDGNPDPVAAARDIRTTFARM) constitute a cross-link (tryptophyl-tyrosyl-methioninium (Tyr-Met) (with W-95)). His-282 lines the heme b pocket.

Belongs to the peroxidase family. Peroxidase/catalase subfamily. In terms of assembly, homodimer or homotetramer. It depends on heme b as a cofactor. Formation of the three residue Trp-Tyr-Met cross-link is important for the catalase, but not the peroxidase activity of the enzyme.

Its subcellular location is the cytoplasm. It carries out the reaction H2O2 + AH2 = A + 2 H2O. The catalysed reaction is 2 H2O2 = O2 + 2 H2O. In terms of biological role, bifunctional enzyme with both catalase and broad-spectrum peroxidase activity. This Aspergillus oryzae (strain ATCC 42149 / RIB 40) (Yellow koji mold) protein is Catalase-peroxidase.